Here is a 71-residue protein sequence, read N- to C-terminus: MDLNLRNAVIANVTGNNQDQLEHTIVDAIQSGEEKMLPGLGVLFEVLWQHASDSEKNEMLKTLEGGLKPAQ.

Belongs to the SspI family.

The protein localises to the spore core. This is Small, acid-soluble spore protein I from Bacillus velezensis (strain DSM 23117 / BGSC 10A6 / LMG 26770 / FZB42) (Bacillus amyloliquefaciens subsp. plantarum).